A 1041-amino-acid polypeptide reads, in one-letter code: Protein EGT2 (1041 aa).

Residues 1–20 form the signal peptide; the sequence is MNKLLLHLVRVISILGLANA. 14 N-linked (GlcNAc...) asparagine glycosylation sites follow: asparagine 65, asparagine 103, asparagine 161, asparagine 175, asparagine 249, asparagine 332, asparagine 401, asparagine 435, asparagine 465, asparagine 485, asparagine 506, asparagine 526, asparagine 544, and asparagine 556. Positions 388-410 are disordered; sequence SSSSISLSAPSSSNSTFTTPSSS. Residues 457–492 form repeat 1; it reads SSTLSYTSNVTISVSSATQHTTTPSYVSNSTTLSSS. The tract at residues 457–962 is 9 X approximate repeats; it reads SSTLSYTSNV…TLKTSTFQKA (506 aa). 2 repeat units span residues 577–606 and 613–647. Residues asparagine 635, asparagine 636, asparagine 657, and asparagine 709 are each glycosylated (N-linked (GlcNAc...) asparagine). The stretch at 716-745 is repeat 4; sequence TDKSDTYSVISSTESAQVTEYDSLLPISTL. Asparagine 756 carries N-linked (GlcNAc...) asparagine glycosylation. Tandem repeats lie at residues 773-802, 811-840, 849-886, 887-924, and 925-962. The GPI-anchor amidated glycine moiety is linked to residue glycine 1020. Residues 1021 to 1041 constitute a propeptide, removed in mature form; the sequence is AAGQLTIRIGSLLLGLISFLL.

The GPI-anchor is attached to the protein in the endoplasmic reticulum and serves to target the protein to the cell surface. There, the glucosamine-inositol phospholipid moiety is cleaved off and the GPI-modified mannoprotein is covalently attached via its lipidless GPI glycan remnant to the 1,6-beta-glucan of the outer cell wall layer.

The protein resides in the secreted. The protein localises to the cell wall. Its subcellular location is the membrane. Functionally, seems to be involved in the correct timing of cell separation after cytokinesis, as separation of mutant daughter cells is delayed. Could either be an enzyme necessary for glucans-degradation of the cell wall at the neck region between mother and daughter cells or a regulatory protein controlling this metabolic step. The protein is Protein EGT2 (EGT2) of Saccharomyces cerevisiae (strain ATCC 204508 / S288c) (Baker's yeast).